The sequence spans 156 residues: Protein-export protein SecB (156 aa).

It belongs to the SecB family. Homotetramer, a dimer of dimers. One homotetramer interacts with 1 SecA dimer.

It is found in the cytoplasm. Functionally, one of the proteins required for the normal export of preproteins out of the cell cytoplasm. It is a molecular chaperone that binds to a subset of precursor proteins, maintaining them in a translocation-competent state. It also specifically binds to its receptor SecA. The sequence is that of Protein-export protein SecB from Paraburkholderia phymatum (strain DSM 17167 / CIP 108236 / LMG 21445 / STM815) (Burkholderia phymatum).